We begin with the raw amino-acid sequence, 232 residues long: Protein lin-7 homolog A (232 aa).

The Kinase interacting site motif lies at 14 to 28; that stretch reads MATLTVVQPLTLDRD. The region spanning 25–80 is the L27 domain; it reads LDRDVARAIELLEKLQESGEVPVHKLQSLKKVLQSEFCTAIREVYQYMHETITVNG. The PDZ domain maps to 108-190; that stretch reads VVELPKTDEG…SVKLVVRYTP (83 aa).

Belongs to the lin-7 family. Forms a complex with CASK and CASKIN1. Component of the brain-specific heterotrimeric complex (LIN-10-LIN-2-LIN-7 complex) composed of at least APBA1, CASK, and LIN7, which associates with the motor protein KIF17 to transport vesicles along microtubules. Can also interact with other modular proteins containing protein-protein interaction domains like PALS1, PALS2, MPP7, DLG1, DLG2 and DLG3 through its L27 domain. Interacts with DLG4 and GRIN2B as well as CDH1 and CTNNB1, the channels KCNJ12/Kir2.2, KCNJ4/Kir2.3 and probably KCNJ2/Kir2.1 and SLC6A12/BGT-1 via its PDZ domain. The association of LIN7A with cadherin and beta-catenin is calcium-dependent, occurs at synaptic junctions and requires the actin cytoskeleton. Interacts with EGFR, ERBB2, ERBB3 and ERBB4 with both PDZ and KID domains. Associates with KIF17 via APBA1. Interacts with HTR4. Forms a tripartite complex composed of DLG1, MPP7 and LIN7 (LIN7A or LIN7C). Interacts with MARCHF11. In terms of tissue distribution, ubiquitously expressed in brain and detected in lung, liver and testis (at protein level). Expression was detected only in brain.

The protein resides in the cell membrane. The protein localises to the basolateral cell membrane. It localises to the cell junction. It is found in the postsynaptic density membrane. Its subcellular location is the tight junction. Its function is as follows. Plays a role in establishing and maintaining the asymmetric distribution of channels and receptors at the plasma membrane of polarized cells. Forms membrane-associated multiprotein complexes that may regulate delivery and recycling of proteins to the correct membrane domains. The tripartite complex composed of LIN7 (LIN7A, LIN7B or LIN7C), CASK and APBA1 associates with the motor protein KIF17 to transport vesicles containing N-methyl-D-aspartate (NMDA) receptor subunit NR2B along microtubules. This complex may have the potential to couple synaptic vesicle exocytosis to cell adhesion in brain. Ensures the proper localization of GRIN2B (subunit 2B of the NMDA receptor) to neuronal postsynaptic density and may function in localizing synaptic vesicles at synapses where it is recruited by beta-catenin and cadherin. Required to localize Kir2 channels, GABA transporter (SLC6A12) and EGFR/ERBB1, ERBB2, ERBB3 and ERBB4 to the basolateral membrane of epithelial cells. The sequence is that of Protein lin-7 homolog A (Lin7a) from Rattus norvegicus (Rat).